A 154-amino-acid chain; its full sequence is Myoglobin (154 aa).

The 147-residue stretch at 2–148 (GLSEGEWQLV…FRKDIATKYK (147 aa)) folds into the Globin domain. Ser4 is modified (phosphoserine). His65 contributes to the nitrite binding site. Position 65 (His65) interacts with O2. Thr68 carries the post-translational modification Phosphothreonine. His94 contributes to the heme b binding site.

It belongs to the globin family. In terms of assembly, monomeric.

It is found in the cytoplasm. Its subcellular location is the sarcoplasm. It carries out the reaction Fe(III)-heme b-[protein] + nitric oxide + H2O = Fe(II)-heme b-[protein] + nitrite + 2 H(+). The enzyme catalyses H2O2 + AH2 = A + 2 H2O. Monomeric heme protein which primary function is to store oxygen and facilitate its diffusion within muscle tissues. Reversibly binds oxygen through a pentacoordinated heme iron and enables its timely and efficient release as needed during periods of heightened demand. Depending on the oxidative conditions of tissues and cells, and in addition to its ability to bind oxygen, it also has a nitrite reductase activity whereby it regulates the production of bioactive nitric oxide. Under stress conditions, like hypoxia and anoxia, it also protects cells against reactive oxygen species thanks to its pseudoperoxidase activity. The protein is Myoglobin (MB) of Phocoenoides dalli dalli (Dall's porpoise).